A 54-amino-acid polypeptide reads, in one-letter code: Synaptosomal-associated protein 25 (54 aa).

The protein belongs to the SNAP-25 family. As to quaternary structure, part of the SNARE core complex containing SNAP25, VAMP2 and STX1A; this complex binds CPLX1. Found in a complex containing SYT1, SV2B and syntaxin-1. Found in a ternary complex with STX1A and VAMP8. Interacts with HSC70 and with SYT9, forming a complex with DNAJC5. The interaction with SYT9 is inhibited in presence of calcium. Isoform 1 and isoform 2 interact with BLOC1S6. Interacts with CENPF. Interacts with EQTN. Interacts with HGS. Interacts with KCNB1 (via N-terminus); reduces the voltage-dependent potassium channel KCNB1 activity in pancreatic beta cells. Interacts with OTOF. Interacts with RIMS1. Interacts with SNAPIN. Interacts with STXBP6. Interacts with TRIM9. Interacts with ZDHHC13 (via ANK repeats). Interacts with ZDHHC17 (via ANK repeats). Associates with the BLOC-1 complex. Interacts with PLCL1 (via C2 domain). Interacts with PRRT2; this interaction may impair the formation of the SNARE complex. Interacts with alpha-synuclein/SNCA. Interacts with PRPH2. Interacts with ROM1. Interacts with STX3. In terms of processing, the N-terminus is blocked.

Its subcellular location is the cytoplasm. It localises to the perinuclear region. The protein resides in the cell membrane. It is found in the synapse. The protein localises to the synaptosome. Its subcellular location is the photoreceptor inner segment. T-SNARE involved in the molecular regulation of neurotransmitter release. May play an important role in the synaptic function of specific neuronal systems. Associates with proteins involved in vesicle docking and membrane fusion. Regulates plasma membrane recycling through its interaction with CENPF. Modulates the gating characteristics of the delayed rectifier voltage-dependent potassium channel KCNB1 in pancreatic beta cells. The polypeptide is Synaptosomal-associated protein 25 (SNAP25) (Oryctolagus cuniculus (Rabbit)).